Consider the following 144-residue polypeptide: Small ribosomal subunit protein uS12 (144 aa).

The disordered stretch occupies residues 1–55 (MPTINQLVRKGREDKVVKSKSPALQKGYNSFKKSQTNQSSPQKRGVCTRVGTMTP). Residues 27–42 (GYNSFKKSQTNQSSPQ) show a composition bias toward polar residues. A 3-methylthioaspartic acid modification is found at aspartate 102. The interval 119–144 (GVNNRKQGRSKYGTKRPKPGQAAAKK) is disordered. Residues 124–144 (KQGRSKYGTKRPKPGQAAAKK) show a composition bias toward basic residues.

It belongs to the universal ribosomal protein uS12 family. As to quaternary structure, part of the 30S ribosomal subunit. Contacts proteins S8 and S17. May interact with IF1 in the 30S initiation complex.

Functionally, with S4 and S5 plays an important role in translational accuracy. Interacts with and stabilizes bases of the 16S rRNA that are involved in tRNA selection in the A site and with the mRNA backbone. Located at the interface of the 30S and 50S subunits, it traverses the body of the 30S subunit contacting proteins on the other side and probably holding the rRNA structure together. The combined cluster of proteins S8, S12 and S17 appears to hold together the shoulder and platform of the 30S subunit. In Brevibacillus brevis (strain 47 / JCM 6285 / NBRC 100599), this protein is Small ribosomal subunit protein uS12.